A 349-amino-acid polypeptide reads, in one-letter code: ATPase GET3 (349 aa).

26-33 (KGGVGKTT) provides a ligand contact to ATP. Asp-57 is an active-site residue. Residues Glu-240 and Asn-267 each contribute to the ATP site. Residues Cys-280 and Cys-283 each contribute to the Zn(2+) site.

This sequence belongs to the arsA ATPase family. As to quaternary structure, homodimer. Component of the Golgi to ER traffic (GET) complex, which is composed of GET1, GET2 and GET3. Within the complex, GET1 and GET2 form a heterotetramer which is stabilized by phosphatidylinositol binding and which binds to the GET3 homodimer. Interacts with the chloride channel protein GEF1.

The protein resides in the cytoplasm. It localises to the endoplasmic reticulum. It is found in the golgi apparatus. Functionally, ATPase required for the post-translational delivery of tail-anchored (TA) proteins to the endoplasmic reticulum. Recognizes and selectively binds the transmembrane domain of TA proteins in the cytosol. This complex then targets to the endoplasmic reticulum by membrane-bound receptors GET1 and GET2, where the tail-anchored protein is released for insertion. This process is regulated by ATP binding and hydrolysis. ATP binding drives the homodimer towards the closed dimer state, facilitating recognition of newly synthesized TA membrane proteins. ATP hydrolysis is required for insertion. Subsequently, the homodimer reverts towards the open dimer state, lowering its affinity for the GET1-GET2 receptor, and returning it to the cytosol to initiate a new round of targeting. Cooperates with the HDEL receptor ERD2 to mediate the ATP-dependent retrieval of resident ER proteins that contain a C-terminal H-D-E-L retention signal from the Golgi to the ER. Involved in low-level resistance to the oxyanions arsenite and arsenate, and in heat tolerance. This Lachancea thermotolerans (strain ATCC 56472 / CBS 6340 / NRRL Y-8284) (Yeast) protein is ATPase GET3.